The sequence spans 504 residues: L-carnitine/gamma-butyrobetaine antiporter (504 aa).

The next 12 helical transmembrane spans lie at I10–V30, W51–F71, I92–I112, G143–V163, F195–V215, L231–L251, S263–M283, W316–A336, L347–G367, L403–I423, L446–L466, and A475–I495.

Belongs to the BCCT transporter (TC 2.A.15) family. CaiT subfamily. Homotrimer.

It localises to the cell inner membrane. It carries out the reaction 4-(trimethylamino)butanoate(in) + (R)-carnitine(out) = 4-(trimethylamino)butanoate(out) + (R)-carnitine(in). It functions in the pathway amine and polyamine metabolism; carnitine metabolism. In terms of biological role, catalyzes the exchange of L-carnitine for gamma-butyrobetaine. The chain is L-carnitine/gamma-butyrobetaine antiporter from Escherichia fergusonii (strain ATCC 35469 / DSM 13698 / CCUG 18766 / IAM 14443 / JCM 21226 / LMG 7866 / NBRC 102419 / NCTC 12128 / CDC 0568-73).